Consider the following 126-residue polypeptide: 13 kDa ribonucleoprotein-associated protein (126 aa).

This sequence belongs to the eukaryotic ribosomal protein eL8 family. Component of the U3 snoRNP particle. Binds to the C'/D and B/C motifs in U3 snoRNA. Component of the 25S U4/U6.U5 tri-snRNP particle, a subcomplex of the spliceosome. Binds to the 5' stem-loop of U4 snRNA.

It is found in the nucleus. It localises to the nucleolus. Common component of the spliceosome and rRNA processing machinery. In association with the spliceosomal U4/U6.U5 tri-snRNP particle, required for splicing of pre-mRNA. In association with box C/D snoRNPs, required for processing of pre-ribosomal RNA (rRNA) and site-specific 2'-O-methylation of substrate RNAs. Essential for the accumulation and stability of U4 snRNA, U6 snRNA, and box C/D snoRNAs. In Kluyveromyces lactis (strain ATCC 8585 / CBS 2359 / DSM 70799 / NBRC 1267 / NRRL Y-1140 / WM37) (Yeast), this protein is 13 kDa ribonucleoprotein-associated protein (SNU13).